The following is a 185-amino-acid chain: dCTP deaminase (185 aa).

Residues 107–112, 131–133, Q152, Y166, and Q176 contribute to the dCTP site; these read KSTYAR and TLE. E133 functions as the Proton donor/acceptor in the catalytic mechanism.

Belongs to the dCTP deaminase family. As to quaternary structure, homotrimer.

It carries out the reaction dCTP + H2O + H(+) = dUTP + NH4(+). It participates in pyrimidine metabolism; dUMP biosynthesis; dUMP from dCTP (dUTP route): step 1/2. Its function is as follows. Catalyzes the deamination of dCTP to dUTP. The sequence is that of dCTP deaminase from Wolbachia sp. subsp. Brugia malayi (strain TRS).